A 426-amino-acid chain; its full sequence is Proline--tRNA ligase (426 aa).

It belongs to the class-II aminoacyl-tRNA synthetase family. ProS type 2 subfamily. In terms of assembly, homodimer.

It is found in the cytoplasm. It catalyses the reaction tRNA(Pro) + L-proline + ATP = L-prolyl-tRNA(Pro) + AMP + diphosphate. Catalyzes the attachment of proline to tRNA(Pro) in a two-step reaction: proline is first activated by ATP to form Pro-AMP and then transferred to the acceptor end of tRNA(Pro). This chain is Proline--tRNA ligase, found in Anaplasma phagocytophilum (strain HZ).